Consider the following 121-residue polypeptide: Large ribosomal subunit protein uL14 (121 aa).

It belongs to the universal ribosomal protein uL14 family. As to quaternary structure, part of the 50S ribosomal subunit. Forms a cluster with proteins L3 and L19. In the 70S ribosome, L14 and L19 interact and together make contacts with the 16S rRNA in bridges B5 and B8.

Functionally, binds to 23S rRNA. Forms part of two intersubunit bridges in the 70S ribosome. The sequence is that of Large ribosomal subunit protein uL14 from Akkermansia muciniphila (strain ATCC BAA-835 / DSM 22959 / JCM 33894 / BCRC 81048 / CCUG 64013 / CIP 107961 / Muc).